The sequence spans 570 residues: MDRSKRNSIAGFPPRVERLEEFEGGGGGDGNTVQVGRVSSSSYRAIISAFSRLTSLDDFTREKIGSGFFSEVFKVRHRASGQVMALKMNTLSSNRANLLKEMQLMNRLSHPNILRFMGVCVHQGQLHALTEYINSGNLEQLLDSNLYLPWTVRVKLAYDIAVGLSYLHFKGIFHRDLTSKNCLIKRDENGYSAVVADFGLAEKIPDASIGSEKLAVVGSPFWMAPEVLRDEPYNEKADVFSYGIILCEIIARIQADPDYLPRTENFGLDYDAFQHMVGDCPSDFLQLTFNCCNMDPKLRPSFEEIGKTLEEIMSRLQEEELERDRKLQPTAKGLLEKVPGGKRLSSLDDKIPHKSPRPRRTIWLSRSQSDIFSRKPPRTVNVLDPYYQPRDGATHTPKVNPFSARQDLKGGKVKFFDLPSKSVISLVFDLDAPGPGTVSLADCQEPLAPSSRRWRSLPGSPEFLHQACPFVGCEESLSDGPPPRLSSLKYRVREIPPFRTSALSATSAHEAMDCSNPQEENGFVPRPKGTSPCSGAASEEMEVEEERPRRAPVHFSISGISLQTQGEQDG.

The region spanning 58–313 (DFTREKIGSG…EIGKTLEEIM (256 aa)) is the Protein kinase domain. Residues 64-72 (IGSGFFSEV) and Lys-87 each bind ATP. The active-site Proton acceptor is Asp-176. At Ser-219 the chain carries Phosphoserine; by autocatalysis. 3 positions are modified to phosphoserine: Ser-369, Ser-456, and Ser-460. The disordered stretch occupies residues 513-570 (DCSNPQEENGFVPRPKGTSPCSGAASEEMEVEEERPRRAPVHFSISGISLQTQGEQDG). Over residues 558-570 (SGISLQTQGEQDG) the composition is skewed to polar residues.

It belongs to the protein kinase superfamily. TKL Ser/Thr protein kinase family. Requires Mg(2+) as cofactor. Mn(2+) is required as a cofactor. Predominantly expressed in testis and prostate. Found predominantly in non-germinal Sertoli cells.

It is found in the nucleus. It catalyses the reaction L-seryl-[protein] + ATP = O-phospho-L-seryl-[protein] + ADP + H(+). It carries out the reaction L-threonyl-[protein] + ATP = O-phospho-L-threonyl-[protein] + ADP + H(+). The enzyme catalyses L-tyrosyl-[protein] + ATP = O-phospho-L-tyrosyl-[protein] + ADP + H(+). Its activity is regulated as follows. Activated by autophosphorylation on Ser-219. In terms of biological role, dual specificity protein kinase activity catalyzing autophosphorylation and phosphorylation of exogenous substrates on both serine/threonine and tyrosine residues. Phosphorylates cofilin at 'Ser-3'. May play an important role in spermatogenesis. This is Dual specificity testis-specific protein kinase 2 (Tesk2) from Rattus norvegicus (Rat).